A 416-amino-acid chain; its full sequence is Dihydroorotase (416 aa).

Zn(2+) contacts are provided by His53 and His55. Substrate-binding positions include His55 to Arg57 and Asn87. Positions 145, 172, 225, and 298 each coordinate Zn(2+). Asp298 is a catalytic residue. His302 contacts substrate.

This sequence belongs to the metallo-dependent hydrolases superfamily. DHOase family. Class I DHOase subfamily. Zn(2+) is required as a cofactor.

The catalysed reaction is (S)-dihydroorotate + H2O = N-carbamoyl-L-aspartate + H(+). Its pathway is pyrimidine metabolism; UMP biosynthesis via de novo pathway; (S)-dihydroorotate from bicarbonate: step 3/3. Its function is as follows. Catalyzes the reversible cyclization of carbamoyl aspartate to dihydroorotate. This is Dihydroorotase from Deinococcus radiodurans (strain ATCC 13939 / DSM 20539 / JCM 16871 / CCUG 27074 / LMG 4051 / NBRC 15346 / NCIMB 9279 / VKM B-1422 / R1).